The primary structure comprises 884 residues: Alanine--tRNA ligase (884 aa).

Zn(2+)-binding residues include His-565, His-569, Cys-672, and His-676.

Belongs to the class-II aminoacyl-tRNA synthetase family. Zn(2+) is required as a cofactor.

It is found in the cytoplasm. The enzyme catalyses tRNA(Ala) + L-alanine + ATP = L-alanyl-tRNA(Ala) + AMP + diphosphate. Its function is as follows. Catalyzes the attachment of alanine to tRNA(Ala) in a two-step reaction: alanine is first activated by ATP to form Ala-AMP and then transferred to the acceptor end of tRNA(Ala). Also edits incorrectly charged Ser-tRNA(Ala) and Gly-tRNA(Ala) via its editing domain. The sequence is that of Alanine--tRNA ligase from Sphingopyxis alaskensis (strain DSM 13593 / LMG 18877 / RB2256) (Sphingomonas alaskensis).